A 256-amino-acid polypeptide reads, in one-letter code: Imidazole glycerol phosphate synthase subunit HisF (256 aa).

Residues Asp-12 and Asp-131 contribute to the active site.

The protein belongs to the HisA/HisF family. In terms of assembly, heterodimer of HisH and HisF.

The protein resides in the cytoplasm. It catalyses the reaction 5-[(5-phospho-1-deoxy-D-ribulos-1-ylimino)methylamino]-1-(5-phospho-beta-D-ribosyl)imidazole-4-carboxamide + L-glutamine = D-erythro-1-(imidazol-4-yl)glycerol 3-phosphate + 5-amino-1-(5-phospho-beta-D-ribosyl)imidazole-4-carboxamide + L-glutamate + H(+). Its pathway is amino-acid biosynthesis; L-histidine biosynthesis; L-histidine from 5-phospho-alpha-D-ribose 1-diphosphate: step 5/9. IGPS catalyzes the conversion of PRFAR and glutamine to IGP, AICAR and glutamate. The HisF subunit catalyzes the cyclization activity that produces IGP and AICAR from PRFAR using the ammonia provided by the HisH subunit. The sequence is that of Imidazole glycerol phosphate synthase subunit HisF from Stutzerimonas stutzeri (strain A1501) (Pseudomonas stutzeri).